The following is a 1019-amino-acid chain: Insulin-degrading enzyme (1019 aa).

Zn(2+) is bound at residue His-108. Residue Glu-111 is the Proton acceptor of the active site. Zn(2+) is bound by residues His-112 and Glu-189. The residue at position 192 (Lys-192) is an N6-succinyllysine. 359 to 363 (LVGGQ) serves as a coordination point for substrate. Arg-429 serves as a coordination point for ATP. N6-succinyllysine is present on Lys-697. A SlyX motif motif is present at residues 853-858 (EKPPHY). Residue 895–901 (DKPKKLS) coordinates ATP.

The protein belongs to the peptidase M16 family. In terms of assembly, homodimer. Can also form homotetramers. It depends on Zn(2+) as a cofactor.

Its subcellular location is the cytoplasm. The protein localises to the cytosol. The protein resides in the cell membrane. It is found in the secreted. It carries out the reaction Degradation of insulin, glucagon and other polypeptides. No action on proteins.. With respect to regulation, activated by ATP, other nucleotide triphosphates and small peptides. Inhibited by bacitracin. Functionally, plays a role in the cellular breakdown of insulin, APP peptides, IAPP peptides, natriuretic peptides, glucagon, bradykinin, kallidin, and other peptides, and thereby plays a role in intercellular peptide signaling. Substrate binding induces important conformation changes, making it possible to bind and degrade larger substrates, such as insulin. Contributes to the regulation of peptide hormone signaling cascades and regulation of blood glucose homeostasis via its role in the degradation of insulin, glucagon and IAPP. Plays a role in the degradation and clearance of APP-derived amyloidogenic peptides that are secreted by neurons and microglia. Degrades the natriuretic peptides ANP, BNP and CNP, inactivating their ability to raise intracellular cGMP. Also degrades an aberrant frameshifted 40-residue form of NPPA (fsNPPA) which is associated with familial atrial fibrillation in heterozygous patients. Involved in antigen processing. Produces both the N terminus and the C terminus of MAGEA3-derived antigenic peptide (EVDPIGHLY) that is presented to cytotoxic T lymphocytes by MHC class I. The sequence is that of Insulin-degrading enzyme (IDE) from Bos taurus (Bovine).